The following is a 474-amino-acid chain: Aspartyl/glutamyl-tRNA(Asn/Gln) amidotransferase subunit B (474 aa).

The protein belongs to the GatB/GatE family. GatB subfamily. In terms of assembly, heterotrimer of A, B and C subunits.

It catalyses the reaction L-glutamyl-tRNA(Gln) + L-glutamine + ATP + H2O = L-glutaminyl-tRNA(Gln) + L-glutamate + ADP + phosphate + H(+). The enzyme catalyses L-aspartyl-tRNA(Asn) + L-glutamine + ATP + H2O = L-asparaginyl-tRNA(Asn) + L-glutamate + ADP + phosphate + 2 H(+). In terms of biological role, allows the formation of correctly charged Asn-tRNA(Asn) or Gln-tRNA(Gln) through the transamidation of misacylated Asp-tRNA(Asn) or Glu-tRNA(Gln) in organisms which lack either or both of asparaginyl-tRNA or glutaminyl-tRNA synthetases. The reaction takes place in the presence of glutamine and ATP through an activated phospho-Asp-tRNA(Asn) or phospho-Glu-tRNA(Gln). This is Aspartyl/glutamyl-tRNA(Asn/Gln) amidotransferase subunit B from Limosilactobacillus fermentum (strain NBRC 3956 / LMG 18251) (Lactobacillus fermentum).